The sequence spans 596 residues: Elongation factor 4 (596 aa).

The 183-residue stretch at 2–184 (KHIRNFSIIA…VIVEQIPPPE (183 aa)) folds into the tr-type G domain. GTP-binding positions include 14 to 19 (DHGKST) and 131 to 134 (NKID).

The protein belongs to the TRAFAC class translation factor GTPase superfamily. Classic translation factor GTPase family. LepA subfamily.

It is found in the cell inner membrane. It carries out the reaction GTP + H2O = GDP + phosphate + H(+). Required for accurate and efficient protein synthesis under certain stress conditions. May act as a fidelity factor of the translation reaction, by catalyzing a one-codon backward translocation of tRNAs on improperly translocated ribosomes. Back-translocation proceeds from a post-translocation (POST) complex to a pre-translocation (PRE) complex, thus giving elongation factor G a second chance to translocate the tRNAs correctly. Binds to ribosomes in a GTP-dependent manner. The sequence is that of Elongation factor 4 from Shewanella piezotolerans (strain WP3 / JCM 13877).